The chain runs to 234 residues: Phosphoribosylaminoimidazole-succinocarboxamide synthase (234 aa).

Belongs to the SAICAR synthetase family.

It catalyses the reaction 5-amino-1-(5-phospho-D-ribosyl)imidazole-4-carboxylate + L-aspartate + ATP = (2S)-2-[5-amino-1-(5-phospho-beta-D-ribosyl)imidazole-4-carboxamido]succinate + ADP + phosphate + 2 H(+). Its pathway is purine metabolism; IMP biosynthesis via de novo pathway; 5-amino-1-(5-phospho-D-ribosyl)imidazole-4-carboxamide from 5-amino-1-(5-phospho-D-ribosyl)imidazole-4-carboxylate: step 1/2. In Clostridium botulinum (strain Loch Maree / Type A3), this protein is Phosphoribosylaminoimidazole-succinocarboxamide synthase.